The chain runs to 143 residues: Large ribosomal subunit protein uL13c (143 aa).

The protein belongs to the universal ribosomal protein uL13 family. Part of the 50S ribosomal subunit.

It is found in the plastid. Its subcellular location is the chloroplast. This chain is Large ribosomal subunit protein uL13c, found in Gracilaria tenuistipitata var. liui (Red alga).